The sequence spans 457 residues: MDTNNNIEKEILALVKQNPKVSLIEYENYLSQLKYNPNASKSDIAFFYAPNKFLCTTITAKYGALLKEILSQNKVGMHLAHSVDVRIEVAPKIQVNAQSNINYKATKTSVKDSYTFENFVVGSCNNTVYEIAKKVAQSDTPPYNPVLFYGGTGLGKTHILNAIGNHALEKHKKVVLVTSEDFLTDFLKHLDNKNMDSFKKKYRHCDFFLLDDAQFLQGKPKLEEEFFHTFNELHANSKQIVLISDRSPKNIAGLEDRLKSRFEWGITAKVMPPDLETKLSIVKQKCQLNKITLPEEVMEYIAQHISDNIRQMEGAIIKISVNANLMNATIDLNLAKTVLEDLQKDHAEGSSLENILLAVAQSLNLKSSEIKVSSRQKNVALARKLVVYFARLYTPNPTLSLAQFLDLKDHSSISKMYSSVKKMLEEEKSPFILSLREEIKNRLNELNDKKTAFNSSE.

The domain I, interacts with DnaA modulators stretch occupies residues 1 to 77; the sequence is MDTNNNIEKE…EILSQNKVGM (77 aa). Residues 77–108 form a domain II region; the sequence is MHLAHSVDVRIEVAPKIQVNAQSNINYKATKT. A domain III, AAA+ region region spans residues 109 to 323; the sequence is SVKDSYTFEN…GAIIKISVNA (215 aa). Gly153, Gly155, Lys156, and Thr157 together coordinate ATP. Residues 324 to 457 form a domain IV, binds dsDNA region; the sequence is NLMNATIDLN…DKKTAFNSSE (134 aa).

The protein belongs to the DnaA family. Oligomerizes as a right-handed, spiral filament on DNA at oriC.

It is found in the cytoplasm. Its function is as follows. Plays an essential role in the initiation and regulation of chromosomal replication. ATP-DnaA binds to the origin of replication (oriC) to initiate formation of the DNA replication initiation complex once per cell cycle. Binds the DnaA box (a 9 base pair repeat at the origin) and separates the double-stranded (ds)DNA. Forms a right-handed helical filament on oriC DNA; dsDNA binds to the exterior of the filament while single-stranded (ss)DNA is stabiized in the filament's interior. The ATP-DnaA-oriC complex binds and stabilizes one strand of the AT-rich DNA unwinding element (DUE), permitting loading of DNA polymerase. After initiation quickly degrades to an ADP-DnaA complex that is not apt for DNA replication. Binds acidic phospholipids. This chain is Chromosomal replication initiator protein DnaA, found in Helicobacter pylori (strain J99 / ATCC 700824) (Campylobacter pylori J99).